A 119-amino-acid polypeptide reads, in one-letter code: MALVQSDENDFHALREAQRMVDSCQDFADHLIVAEFLPHCRGVAYINIRTLEQVIYCVQLSRAGYRIVSYEFDDVADEVANCDTVYESAHQLLAGISPLYGEKYGFGREPLGKRKEKQS.

The protein belongs to the GSKIP family.

This is Protein GSKIP homolog from Drosophila melanogaster (Fruit fly).